The chain runs to 203 residues: Large ribosomal subunit protein uL18 (203 aa).

Belongs to the universal ribosomal protein uL18 family. As to quaternary structure, part of the 50S ribosomal subunit. Contacts the 5S and 23S rRNAs.

Functionally, this is one of the proteins that bind and probably mediate the attachment of the 5S RNA into the large ribosomal subunit, where it forms part of the central protuberance. The chain is Large ribosomal subunit protein uL18 from Pyrococcus horikoshii (strain ATCC 700860 / DSM 12428 / JCM 9974 / NBRC 100139 / OT-3).